Here is a 188-residue protein sequence, read N- to C-terminus: dCTP deaminase (188 aa).

Residues 111–116 (KSTYAR), 135–137 (TLE), Q156, Y170, and Q180 contribute to the dCTP site. The Proton donor/acceptor role is filled by E137.

It belongs to the dCTP deaminase family. As to quaternary structure, homotrimer.

It catalyses the reaction dCTP + H2O + H(+) = dUTP + NH4(+). It participates in pyrimidine metabolism; dUMP biosynthesis; dUMP from dCTP (dUTP route): step 1/2. Its function is as follows. Catalyzes the deamination of dCTP to dUTP. The polypeptide is dCTP deaminase (Polaromonas sp. (strain JS666 / ATCC BAA-500)).